Reading from the N-terminus, the 355-residue chain is Putative [LysW]-L-2-aminoadipate/[LysW]-L-glutamate phosphate reductase (355 aa).

13 to 16 (SGMT) contributes to the NADP(+) binding site. The active site involves Cys-153. Asn-323 contacts NADP(+).

This sequence belongs to the NAGSA dehydrogenase family. Type 1 subfamily. LysY sub-subfamily.

It localises to the cytoplasm. The catalysed reaction is [amino-group carrier protein]-C-terminal-N-(1-carboxy-5-oxopentan-1-yl)-L-glutamine + phosphate + NADP(+) = [amino-group carrier protein]-C-terminal-N-(1-carboxy-5-phosphooxy-5-oxopentan-1-yl)-L-glutamine + NADPH + H(+). It catalyses the reaction [amino-group carrier protein]-C-terminal-gamma-(L-glutamyl-5-semialdehyde)-L-glutamate + phosphate + NADP(+) = [amino-group carrier protein]-C-terminal-gamma-(5-phospho-L-glutamyl)-L-glutamate + NADPH + H(+). Its pathway is amino-acid biosynthesis; L-lysine biosynthesis via AAA pathway; L-lysine from L-alpha-aminoadipate (Thermus route): step 3/5. It participates in amino-acid biosynthesis; L-arginine biosynthesis. Involved in both the arginine and lysine biosynthetic pathways. This is Putative [LysW]-L-2-aminoadipate/[LysW]-L-glutamate phosphate reductase from Aeropyrum pernix (strain ATCC 700893 / DSM 11879 / JCM 9820 / NBRC 100138 / K1).